Here is a 232-residue protein sequence, read N- to C-terminus: Orotidine 5'-phosphate decarboxylase (232 aa).

Substrate-binding positions include D13, K35, 62–71 (DLKFHDIPNT), T122, R182, Q191, G211, and R212. K64 (proton donor) is an active-site residue.

The protein belongs to the OMP decarboxylase family. Type 1 subfamily. Homodimer.

The catalysed reaction is orotidine 5'-phosphate + H(+) = UMP + CO2. The protein operates within pyrimidine metabolism; UMP biosynthesis via de novo pathway; UMP from orotate: step 2/2. Its function is as follows. Catalyzes the decarboxylation of orotidine 5'-monophosphate (OMP) to uridine 5'-monophosphate (UMP). This chain is Orotidine 5'-phosphate decarboxylase, found in Pseudomonas syringae pv. tomato (strain ATCC BAA-871 / DC3000).